The primary structure comprises 349 residues: Peroxisomal acyl-coenzyme A thioester hydrolase 1 (349 aa).

Catalysis depends on charge relay system residues Asp259, Ser282, and Gln333. The short motif at 347–349 is the Microbody targeting signal element; sequence AKF.

This sequence belongs to the C/M/P thioester hydrolase family.

Its subcellular location is the peroxisome. The catalysed reaction is hexadecanoyl-CoA + H2O = hexadecanoate + CoA + H(+). Its function is as follows. Acyl-coenzyme A (acyl-CoA) thioesterases are a group of enzymes that catalyze the hydrolysis of acyl-CoAs to the free fatty acid and coenzyme A (CoASH), providing the potential to regulate intracellular levels of acyl-CoAs, free fatty acids and CoASH. Contributes to growth on fatty acids. In Saccharomyces cerevisiae (strain ATCC 204508 / S288c) (Baker's yeast), this protein is Peroxisomal acyl-coenzyme A thioester hydrolase 1 (TES1).